The sequence spans 156 residues: Dihydrofolate reductase (156 aa).

One can recognise a DHFR domain in the interval 1–156 (MLKLIWCQTL…VNYYSNKKEK (156 aa)).

The protein belongs to the dihydrofolate reductase family.

It catalyses the reaction (6S)-5,6,7,8-tetrahydrofolate + NADP(+) = 7,8-dihydrofolate + NADPH + H(+). The protein operates within cofactor biosynthesis; tetrahydrofolate biosynthesis; 5,6,7,8-tetrahydrofolate from 7,8-dihydrofolate: step 1/1. Functionally, key enzyme in folate metabolism. Catalyzes an essential reaction for de novo glycine and purine synthesis, and for DNA precursor synthesis. The sequence is that of Dihydrofolate reductase (folA) from Ureaplasma parvum serovar 3 (strain ATCC 700970).